The sequence spans 253 residues: uncharacterized protein (253 aa).

Residues 62 to 78 (WCSIGWSIGALIIFLVY) traverse the membrane as a helical segment. Residues 141–158 (TTPQTTTPEIPSSTEPQE) are compositionally biased toward low complexity. The segment at 141-225 (TTPQTTTPEI…HDNQPLEERH (85 aa)) is disordered. Over residues 200-216 (NVEDEPPPNKPEEEEDH) the composition is skewed to acidic residues.

It localises to the host membrane. This is an uncharacterized protein from Aedes vexans (Inland floodwater mosquito).